A 500-amino-acid chain; its full sequence is Maturase K (500 aa).

It belongs to the intron maturase 2 family. MatK subfamily.

Its subcellular location is the plastid. The protein localises to the chloroplast. Usually encoded in the trnK tRNA gene intron. Probably assists in splicing its own and other chloroplast group II introns. This Brasenia schreberi (Water shield) protein is Maturase K.